We begin with the raw amino-acid sequence, 383 residues long: F-box/kelch-repeat protein At4g19330 (383 aa).

A disordered region spans residues Met1–Ser27. The F-box domain occupies Pro28–Thr79. Kelch repeat units lie at residues Glu147–Gly192, Lys193–Thr239, and Ser272–Gly318.

In terms of biological role, involved in seed germination. In Arabidopsis thaliana (Mouse-ear cress), this protein is F-box/kelch-repeat protein At4g19330.